The chain runs to 371 residues: Cytochrome b (371 aa).

4 consecutive transmembrane segments (helical) span residues 24-44 (FGSMLLACLTLQITTGFFLAL), 68-89 (WTMQNLHSIGASMFFICIYIHI), 104-124 (WLSGITLLATLMATAFFGYVL), and 169-189 (FFALHFILPFAIVSLTSVHIV). Heme b-binding residues include His74 and His88. Heme b-binding residues include His173 and His187. His192 provides a ligand contact to a ubiquinone. Helical transmembrane passes span 217-237 (YKDTLMLTFMITTLFMIMSFA), 279-299 (LGGTLALVMSIAILMTMPFTH), 311-331 (LSQLMFWTLIATFITITWTAT), and 338-357 (FITIGQLTSILYFSFFMTNP).

This sequence belongs to the cytochrome b family. The cytochrome bc1 complex contains 3 respiratory subunits (MT-CYB, CYC1 and UQCRFS1), 2 core proteins (UQCRC1 and UQCRC2) and probably 6 low-molecular weight proteins. Requires heme b as cofactor.

The protein resides in the mitochondrion inner membrane. In terms of biological role, component of the ubiquinol-cytochrome c reductase complex (complex III or cytochrome b-c1 complex) that is part of the mitochondrial respiratory chain. The b-c1 complex mediates electron transfer from ubiquinol to cytochrome c. Contributes to the generation of a proton gradient across the mitochondrial membrane that is then used for ATP synthesis. The polypeptide is Cytochrome b (MT-CYB) (Homoroselaps lacteus (Spotted harlequin snake)).